A 359-amino-acid chain; its full sequence is Fructose-bisphosphate aldolase (359 aa).

D-glyceraldehyde 3-phosphate is bound at residue Ser61. Catalysis depends on Asp109, which acts as the Proton donor. His110, Asp144, Glu174, and His226 together coordinate Zn(2+). Gly227 contacts dihydroxyacetone phosphate. His265 serves as a coordination point for Zn(2+). Dihydroxyacetone phosphate is bound by residues 266-268 (GGS) and 287-290 (NIDT).

Belongs to the class II fructose-bisphosphate aldolase family. Zn(2+) serves as cofactor.

The catalysed reaction is beta-D-fructose 1,6-bisphosphate = D-glyceraldehyde 3-phosphate + dihydroxyacetone phosphate. The protein operates within carbohydrate degradation; glycolysis; D-glyceraldehyde 3-phosphate and glycerone phosphate from D-glucose: step 4/4. Its function is as follows. Catalyzes the aldol condensation of dihydroxyacetone phosphate (DHAP or glycerone-phosphate) with glyceraldehyde 3-phosphate (G3P) to form fructose 1,6-bisphosphate (FBP) in gluconeogenesis and the reverse reaction in glycolysis. This chain is Fructose-bisphosphate aldolase (fba), found in Borreliella burgdorferi (strain ATCC 35210 / DSM 4680 / CIP 102532 / B31) (Borrelia burgdorferi).